A 512-amino-acid chain; its full sequence is MLSLDLVFSFPAWALLLVLTLLYTLYLATTRLLLSPIRHIPGPTLAALSFWPEFYYDVVQRGQYFRQIDKMHQTYGPLVRINPFEIHIQDPSFYPVLYTGPTRRRHKWLWAARMFGNNTSAFATVRHEHHRLRRSALNPLFSKSAIQRLTPHLQHTLARLCSRLDGFAFTRQDVDLGIGLTAFAADVITEYCFGQSLELIGKDNFGKEWIDMVSAPSELGHLVKQCPWILVVCKWAPKALVRALLPGVALLFQIQERMSAQIQPLVDRAAAVDKPADPLTVFDFLLSSTLPQHEKTVDRLKGEGQTLIGAGTLTTGNALKTIIFHVLNDPDIFRKLRAEVDGALENMDILSMSDTAYLERLPYLSACIKEGLRISYGVTHRLQLIAEEPLIYSGVTIPAGTPVGMTSIFMHDNPVVFPQPREFRPERWFEADFETVQAMNRHFVPFSKGSRMCLGMNLAYAEIYLVLAVLFRRYEISLSGVTREDIEMAHDFFDPAPKEGARGLIVQLQKRG.

The chain crosses the membrane as a helical span at residues 6–26 (LVFSFPAWALLLVLTLLYTLY). Asn118 is a glycosylation site (N-linked (GlcNAc...) asparagine). Cys453 serves as a coordination point for heme.

This sequence belongs to the cytochrome P450 family. Requires heme as cofactor.

The protein localises to the membrane. The protein operates within pigment biosynthesis. N-acetyltryptophan 6-hydroxylase; part of the pathway that mediates the biosynthesis of the gray-brown conidiophore pigment. The first step of the pathway is performed by the nonribosomal peptide synthetase ivoA that catalyzes ATP-dependent unidirectional stereoinversion of L-tryptophan to D-tryptophan with complete conversion. While the stereoinversion is catalyzed by the epimerization (E) domain of ivoA, the terminal condensation (C) domain stereoselectively hydrolyzes D-tryptophanyl-S-phosphopantetheine thioester and thus represents a non-canonical C domain function. D-tryptophan is acetylated, probably by an endogenous acetyltransferase. N-acetyltryptophan is further 6-hydroxylated into N-acetyl-6-hydroxytryptophan (AHT) by the cytochrome P450 monooxygenase ivoC. N-acetyl-6-hydroxytryptophan is substrate of the N-acetyl-6-hydroxytryptophan oxidase ivoB to produce the gray-brown conidiophore pigment. The chain is N-acetyltryptophan 6-hydroxylase ivoC from Emericella nidulans (strain FGSC A4 / ATCC 38163 / CBS 112.46 / NRRL 194 / M139) (Aspergillus nidulans).